The chain runs to 256 residues: Floral homeotic protein APETALA 1 (256 aa).

Residues Met-1–Ser-61 enclose the MADS-box domain. A K-box domain is found at Asn-88–Ile-178.

In terms of assembly, homodimer capable of binding to CArG-box sequences.

The protein resides in the nucleus. Functionally, transcription factor that promotes early floral meristem identity in synergy with LEAFY. Displays a redundant function with CAULIFLOWER in the up-regulation of LEAFY. Required subsequently for the transition of an inflorescence meristem into a floral meristem, and for the normal development of sepals and petals in flowers. Regulates positively B class homeotic proteins. The protein is Floral homeotic protein APETALA 1 (AP1) of Citrus sinensis (Sweet orange).